Reading from the N-terminus, the 255-residue chain is 3-deoxy-manno-octulosonate cytidylyltransferase (255 aa).

This sequence belongs to the KdsB family.

It localises to the cytoplasm. The enzyme catalyses 3-deoxy-alpha-D-manno-oct-2-ulosonate + CTP = CMP-3-deoxy-beta-D-manno-octulosonate + diphosphate. It functions in the pathway nucleotide-sugar biosynthesis; CMP-3-deoxy-D-manno-octulosonate biosynthesis; CMP-3-deoxy-D-manno-octulosonate from 3-deoxy-D-manno-octulosonate and CTP: step 1/1. The protein operates within bacterial outer membrane biogenesis; lipopolysaccharide biosynthesis. Its function is as follows. Activates KDO (a required 8-carbon sugar) for incorporation into bacterial lipopolysaccharide in Gram-negative bacteria. The polypeptide is 3-deoxy-manno-octulosonate cytidylyltransferase (Hahella chejuensis (strain KCTC 2396)).